The chain runs to 145 residues: Large-conductance mechanosensitive channel (145 aa).

Helical transmembrane passes span 16 to 36 (VVDL…VTSF) and 83 to 103 (GVFI…FMVI).

It belongs to the MscL family. Homopentamer.

Its subcellular location is the cell inner membrane. In terms of biological role, channel that opens in response to stretch forces in the membrane lipid bilayer. May participate in the regulation of osmotic pressure changes within the cell. This is Large-conductance mechanosensitive channel from Geobacter metallireducens (strain ATCC 53774 / DSM 7210 / GS-15).